A 393-amino-acid chain; its full sequence is Telomeric repeat-binding factor 2-interacting protein 1 (393 aa).

Ala-2 is subject to N-acetylalanine. Residues Ser-36 and Ser-43 each carry the phosphoserine modification. In terms of domain architecture, BRCT spans 78 to 101; that stretch reads FISTQYILDCVDRNEKLDLEAYRL. The tract at residues 104–132 is disordered; that stretch reads TEQASDPKPGASTEGSTEPEPQPLTGRIA. Lys-111 participates in a covalent cross-link: Glycyl lysine isopeptide (Lys-Gly) (interchain with G-Cter in SUMO2). The Myb-like domain maps to 125–185; the sequence is QPLTGRIAYT…SLKDRYLKHL (61 aa). A phosphoserine mark is found at Ser-151 and Ser-153. Lys-191 participates in a covalent cross-link: Glycyl lysine isopeptide (Lys-Gly) (interchain with G-Cter in SUMO2). A disordered region spans residues 193–304; it reads LLGNAPVSPS…EEEPKVSTQE (112 aa). A phosphoserine mark is found at Ser-200 and Ser-203. Residues Lys-205, Lys-209, and Lys-237 each participate in a glycyl lysine isopeptide (Lys-Gly) (interchain with G-Cter in SUMO2) cross-link. Basic and acidic residues predominate over residues 223-252; sequence QNKRAPDLPEEECVKGEIKENGEADNKLFE. The segment covering 282 to 297 has biased composition (acidic residues); sequence TPEEDSETQPDEEEEE. Residue Lys-366 forms a Glycyl lysine isopeptide (Lys-Gly) (interchain with G-Cter in SUMO2) linkage. Positions 377–393 match the Nuclear localization signal motif; sequence KKFGAQNVARRIEFRKK.

It belongs to the RAP1 family. As to quaternary structure, homodimer. Component of the shelterin complex (telosome) composed of TERF1, TERF2, TINF2, TERF2IP ACD and POT1. Binds to TERF2 (but not TERF1) with its C-terminus. Interacts with SLX4/BTBD12. Interacts with TERF2; the interaction is direct. Does not interact with TERF1. Associates with the I-kappa-B-kinase (IKK) core complex, composed of CHUK, IKBKB and IKBKG.

The protein resides in the nucleus. It is found in the cytoplasm. The protein localises to the chromosome. It localises to the telomere. Functionally, acts both as a regulator of telomere function and as a transcription regulator. Involved in the regulation of telomere length and protection as a component of the shelterin complex (telosome). In contrast to other components of the shelterin complex, it is dispensible for telomere capping and does not participate in the protection of telomeres against non-homologous end-joining (NHEJ)-mediated repair. Instead, it is required to negatively regulate telomere recombination and is essential for repressing homology-directed repair (HDR), which can affect telomere length. Does not bind DNA directly: recruited to telomeric double-stranded 5'-TTAGGG-3' repeats via its interaction with TERF2. Independently of its function in telomeres, also acts as a transcription regulator: recruited to extratelomeric 5'-TTAGGG-3' sites via its association with TERF2 or other factors, and regulates gene expression. When cytoplasmic, associates with the I-kappa-B-kinase (IKK) complex and acts as a regulator of the NF-kappa-B signaling by promoting IKK-mediated phosphorylation of RELA/p65, leading to activate expression of NF-kappa-B target genes. The polypeptide is Telomeric repeat-binding factor 2-interacting protein 1 (Terf2ip) (Mus musculus (Mouse)).